Here is a 93-residue protein sequence, read N- to C-terminus: UPF0521 protein B (93 aa).

Residues serine 2–threonine 58 adopt a coiled-coil conformation.

It belongs to the UPF0521 family.

This chain is UPF0521 protein B, found in Dictyostelium discoideum (Social amoeba).